Here is a 164-residue protein sequence, read N- to C-terminus: Anterior gradient protein 3 (164 aa).

The first 19 residues, 1–19 (MYFPMIELTLVLLASSNLA), serve as a signal peptide directing secretion. Positions 161-164 (QTEL) match the Prevents secretion from ER motif.

The protein belongs to the AGR family.

Its subcellular location is the endoplasmic reticulum. It is found in the cytoplasm. Functionally, required for calcium-mediated regulation of ciliary beat frequency in the airway. This Xenopus tropicalis (Western clawed frog) protein is Anterior gradient protein 3.